Consider the following 569-residue polypeptide: TBCC domain-containing protein 1 (569 aa).

Residues P304–L435 enclose the C-CAP/cofactor C-like domain.

The protein belongs to the TBCC family.

The protein localises to the cytoplasm. Its subcellular location is the cytoskeleton. The protein resides in the microtubule organizing center. It is found in the centrosome. It localises to the spindle pole. Its function is as follows. Plays a role in the regulation of centrosome and Golgi apparatus positioning, with consequences on cell shape and cell migration. The sequence is that of TBCC domain-containing protein 1 (Tbccd1) from Rattus norvegicus (Rat).